Reading from the N-terminus, the 322-residue chain is Transcription cofactor vestigial-like protein 2 (322 aa).

Positions 42–61 (ASPGSSASGSSSFSNPTPAS) are enriched in low complexity. 2 disordered regions span residues 42–75 (ASPG…ERPP) and 248–322 (PGRL…PTLG). The span at 62-75 (VKEEEGSPEKERPP) shows a compositional bias: basic and acidic residues. 2 stretches are compositionally biased toward low complexity: residues 248–258 (PGRLAPASAPA) and 270–283 (GEPA…PGGP). Residues 312–322 (SAPPALYPTLG) show a composition bias toward pro residues.

Belongs to the vestigial family. Interacts with TEFs. Binds to TEAD1/TEF1. In terms of tissue distribution, skeletal muscle specific.

The protein localises to the nucleus. Functionally, may act as a specific coactivator for the mammalian TEFs. May play a role in the development of skeletal muscles. The chain is Transcription cofactor vestigial-like protein 2 (Vgll2) from Mus musculus (Mouse).